The primary structure comprises 492 residues: NADH-ubiquinone oxidoreductase chain 4 (492 aa).

The next 15 helical transmembrane spans lie at 9–29 (LILTSLTPLIGVFILLLIPSA), 36–56 (NFALWISCLTFLFSLLLWIQF), 63–83 (FQFSTTFLWFPFFNLYYTIGI), 86–106 (ISLFFILLTTLLIISCILVSW), 115–135 (DYLICFLILEFLLIQVFSVLD), 136–156 (LLLFYIYFESVLIPMFLIVGV), 170–190 (FFLYTLIGSLLMLLALLNIYF), 211–231 (IFLWLSFFASFAVKIPMIPFH), 242–262 (PTAGSVILAGILLKMGGYGFL), 269–289 (FPVASIFFTPFIFTLSLVAII), 304–324 (IIAYSSVSHMGFVTIGIFSLN), 332–352 (ILLMLSHGLVSSALFLCIGVL), 370–390 (VMPLFGVFFLFFTFANLGFPG), 410–430 (TLTLFASLGMIFGAAYSIWLF), and 454–474 (FWILIPLAILILWMGIYPNSF).

The protein belongs to the complex I subunit 4 family.

The protein localises to the mitochondrion membrane. The catalysed reaction is a ubiquinone + NADH + 5 H(+)(in) = a ubiquinol + NAD(+) + 4 H(+)(out). Functionally, core subunit of the mitochondrial membrane respiratory chain NADH dehydrogenase (Complex I) that is believed to belong to the minimal assembly required for catalysis. Complex I functions in the transfer of electrons from NADH to the respiratory chain. The immediate electron acceptor for the enzyme is believed to be ubiquinone. This Chondrus crispus (Carrageen Irish moss) protein is NADH-ubiquinone oxidoreductase chain 4 (ND4).